A 198-amino-acid chain; its full sequence is dITP/XTP pyrophosphatase (198 aa).

Substrate is bound at residue 8–13 (TKNKGK). D69 functions as the Proton acceptor in the catalytic mechanism. A Mg(2+)-binding site is contributed by D69. Substrate is bound by residues S70, 152-155 (FGYD), K175, and 180-181 (HR).

This sequence belongs to the HAM1 NTPase family. As to quaternary structure, homodimer. Mg(2+) is required as a cofactor.

It catalyses the reaction XTP + H2O = XMP + diphosphate + H(+). It carries out the reaction dITP + H2O = dIMP + diphosphate + H(+). The catalysed reaction is ITP + H2O = IMP + diphosphate + H(+). In terms of biological role, pyrophosphatase that catalyzes the hydrolysis of nucleoside triphosphates to their monophosphate derivatives, with a high preference for the non-canonical purine nucleotides XTP (xanthosine triphosphate), dITP (deoxyinosine triphosphate) and ITP. Seems to function as a house-cleaning enzyme that removes non-canonical purine nucleotides from the nucleotide pool, thus preventing their incorporation into DNA/RNA and avoiding chromosomal lesions. The protein is dITP/XTP pyrophosphatase of Shouchella clausii (strain KSM-K16) (Alkalihalobacillus clausii).